Here is a 66-residue protein sequence, read N- to C-terminus: Large ribosomal subunit protein bL32 (66 aa).

The protein belongs to the bacterial ribosomal protein bL32 family.

The polypeptide is Large ribosomal subunit protein bL32 (Rickettsia akari (strain Hartford)).